The chain runs to 377 residues: Glutamate 5-kinase (377 aa).

Lysine 22 is an ATP binding site. Residues serine 62, aspartate 149, and asparagine 161 each contribute to the substrate site. Residues 181 to 182 (TD) and 223 to 229 (TGGMVTK) contribute to the ATP site. Residues 285 to 363 (RGVLVADSGA…AQLRRLLGEE (79 aa)) enclose the PUA domain.

This sequence belongs to the glutamate 5-kinase family.

The protein localises to the cytoplasm. The catalysed reaction is L-glutamate + ATP = L-glutamyl 5-phosphate + ADP. Its pathway is amino-acid biosynthesis; L-proline biosynthesis; L-glutamate 5-semialdehyde from L-glutamate: step 1/2. Catalyzes the transfer of a phosphate group to glutamate to form L-glutamate 5-phosphate. The sequence is that of Glutamate 5-kinase from Bifidobacterium animalis subsp. lactis (strain AD011).